The following is a 652-amino-acid chain: Acetyl-coenzyme A synthetase (652 aa).

Residues 191–194 (RAGR), threonine 311, and asparagine 335 each bind CoA. ATP-binding positions include 387 to 389 (GEP), 411 to 416 (DTWWQT), aspartate 500, and arginine 515. Serine 523 contacts CoA. Arginine 526 contacts ATP. 3 residues coordinate Mg(2+): valine 537, histidine 539, and isoleucine 542. Arginine 584 is a binding site for CoA. An N6-acetyllysine modification is found at lysine 609.

It belongs to the ATP-dependent AMP-binding enzyme family. Requires Mg(2+) as cofactor. Post-translationally, acetylated. Deacetylation by the SIR2-homolog deacetylase activates the enzyme.

The enzyme catalyses acetate + ATP + CoA = acetyl-CoA + AMP + diphosphate. Its function is as follows. Catalyzes the conversion of acetate into acetyl-CoA (AcCoA), an essential intermediate at the junction of anabolic and catabolic pathways. Acs undergoes a two-step reaction. In the first half reaction, Acs combines acetate with ATP to form acetyl-adenylate (AcAMP) intermediate. In the second half reaction, it can then transfer the acetyl group from AcAMP to the sulfhydryl group of CoA, forming the product AcCoA. Functionally, enables the cell to use acetate during aerobic growth to generate energy via the TCA cycle, and biosynthetic compounds via the glyoxylate shunt. Acetylates CheY, the response regulator involved in flagellar movement and chemotaxis. This is Acetyl-coenzyme A synthetase from Sodalis glossinidius (strain morsitans).